Consider the following 964-residue polypeptide: MQKIKSLMTRQGLKSPPESLNDLGAFESLRVPGKEEFRELREQPSDPQAEQELINSIEQVYFSADPFDIVKYELEKLPPVLNLQELEEYRDKLKQQQSAVSKKVADLILEKQPAYVKELERVTSLQTGLQLAAVICTNGRRHLNIAKEGFTQASLGLLANQRKRQLLIGLLKSLRTIKTLQRTDIRLSEMLEEEDYPGAIQLCLECQKAASTFKHYSCISELNSKLQDTLEQIEEQLDVALSKICKNFDINHYTKVQQAYRLLGKTQTAMDQLHMHFTQAIHNTVFQVVLGYVELCAGNTDTKFQKLQYKDLCTHVTPDSYIPCLADLCKALWEVMLSYYRTMEWHEKHDNEETAAAAEGSNVMSTEEATFDRGYVKKKLEHGLTRIWQDVQLKVKTYLLGTDLSIFKYDDFIFVLDIVSRLMQVGEEFCGSKSEVLQESIRKQSVNYFKNHHRIRLDELRMFLENETWELCPVKSNFSILQLHEFKFLEQSRSPSVSPSKQPSATSSKPVTLFEQYCSGGNPFEIQADHKDEETEDVLASNGYESDEQEKSAYQDYDSDSDVPEELKRDYVDEQTGDVPVKSVSRETLKSRKKSDYSLNKVNAPILTNTTLNVIRLVGKYMQMMNILKPIAFDVIHFMSQLFDYYLYAIYTFFGRNDSLESTGLGLSSSRLKTTLNRIQESLIDLEGSADPTATLTAAEERKEKVPSPHLNQLVILTSGDTLYGLAERVVATESLVFLAEQFEFLQPHLDAVMPAVKKPFLQQFYSQTVSTASELRKPIYWIVAGKAIDYEQMLLLMMNVKWDVKEIMSQHNIYVDALLKEFEQFNKRLNEVSKRVRIPLPVSNILWEHCIRLANRTIVEGYANVKKCSNEGRALMQLDFQQFLMKLEKLTDIRPIPDKEFVETYIKAYYLTENDMERWIKEHREYSTKQLTNLVNVCLGSHINKKARQKLLAAIDEIDRPKR.

Methionine 1 carries the N-acetylmethionine modification. The segment at 1–25 is disordered; the sequence is MQKIKSLMTRQGLKSPPESLNDLGA. Serine 15 bears the Phosphoserine mark. 2 coiled-coil regions span residues 81–107 and 216–244; these read LNLQ…VADL and YSCI…LSKI. Serine 494, serine 498, serine 559, and serine 561 each carry phosphoserine. A disordered region spans residues 532–563; sequence DEETEDVLASNGYESDEQEKSAYQDYDSDSDV. Lysine 963 is covalently cross-linked (Glycyl lysine isopeptide (Lys-Gly) (interchain with G-Cter in SUMO1); alternate). Lysine 963 is covalently cross-linked (Glycyl lysine isopeptide (Lys-Gly) (interchain with G-Cter in SUMO2); alternate).

The protein belongs to the syndetin family. In terms of assembly, component of the endosome-associated retrograde protein (EARP) complex, composed of VPS51, VPS52, VPS53 and VPS50/Syndetin. The EARP complex interacts with EIPR1. Interacts with VPS51 and VPS53 in an EIPR1-independent manner.

It is found in the recycling endosome. The protein localises to the membrane. In terms of biological role, acts as a component of the EARP complex that is involved in endocytic recycling. The EARP complex associates with Rab4-positive endosomes and promotes recycling of internalized transferrin receptor (TFRC) to the plasma membrane. Within the EARP complex, required to tether the complex to recycling endosomes. Not involved in retrograde transport from early and late endosomes to the trans-Golgi network (TGN). This is Syndetin from Mus musculus (Mouse).